The primary structure comprises 385 residues: UPF0496 protein At3g28290 (385 aa).

Residues 138-214 (KDKENDVGKK…IEMEISSRKK (77 aa)) adopt a coiled-coil conformation. Helical transmembrane passes span 217 to 237 (IISNVLFIGAFVAVAVGSMVL) and 242 to 262 (VGAGVGVAGLLSLPLIAIGWV). Positions 267 to 294 (ILENKIQAREKQEEALKKAHRIANEMDK) form a coiled coil.

It belongs to the UPF0496 family. Widely expressed.

The protein localises to the membrane. This is UPF0496 protein At3g28290 from Arabidopsis thaliana (Mouse-ear cress).